Reading from the N-terminus, the 155-residue chain is uncharacterized protein (155 aa).

4 helical membrane passes run 25–45 (LPMG…FGWT), 50–70 (IFWF…IMTS), 91–111 (GVKI…ESLF), and 118–138 (WGCT…PILF).

This sequence belongs to the major facilitator superfamily. CAR1 family.

The protein localises to the membrane. This is an uncharacterized protein from Schizosaccharomyces pombe (strain 972 / ATCC 24843) (Fission yeast).